A 1106-amino-acid polypeptide reads, in one-letter code: Protein shuttle craft (1106 aa).

Disordered stretches follow at residues 7–26 and 189–371; these read QLTNGAGEAGPGNESSAMAD and PAAA…KLSQ. Residues 189 to 201 show a composition bias toward low complexity; it reads PAAATTNGNSTAS. Basic and acidic residues-rich tracts occupy residues 232-270 and 278-323; these read NYERERERERDRDRDRERDRDRDRDRDRDRDRDRDRDSR and RRSD…RDRI. Thr-335 is modified (phosphothreonine). Ser-336, Ser-339, Ser-343, and Ser-354 each carry phosphoserine. Residues 336–354 are compositionally biased toward polar residues; it reads SNESAHPSPEKQSQLQQIS. Residues 386–433 form an RING-type; atypical zinc finger; it reads CLVCVEAIKSHQPTWSCRNCYHMLHLKCTITWASSSKSEVGWRCPACQ. NF-X1-type zinc fingers lie at residues 474–492, 527–546, 585–604, 644–667, 706–725, 733–752, 844–867, and 876–896; these read CSHACTLLCHPGPCPPCQA, CGEHRCQAECHSGKCAACSE, CGHHKCKDSCHAGSCRPCKL, CGKPAHPHQCGSKCHLGQCPPCPK, CGKHKCNVECCIDIDHDCPL, CGKHKCDQPCHRGNCPPCYR, CGGHKCIKPCHEGPCQSAGEICRQ, and CGHKCAAACHEGACPETPCKE. The 66-residue stretch at 1006-1071 folds into the R3H domain; it reads TKSVYETLTD…NRNVVATAHK (66 aa).

Belongs to the NFX1 family. Ovaries and embryonic central nervous system.

Its subcellular location is the nucleus. Plays an essential role during the late stages of embryonic neurogenesis. May either fine-tune the guidance or the spatial maintenance of the migrating SNB and in nerve roots, which are composed of axons originating from distinct groups of motor neurons and may be required to either guide or maintain the position of these nerves along a direct and straight path to their ultimate targets in particular muscle fields. May play a role in egg chamber development and/or may confer essential maternal contributions to the early embryo. This chain is Protein shuttle craft (stc), found in Drosophila melanogaster (Fruit fly).